A 521-amino-acid polypeptide reads, in one-letter code: Cytochrome P450 monooxygenase ABA2 (521 aa).

The chain crosses the membrane as a helical span at residues 15–35 (AGHLGMAVTFTILVAFTIHVL). N-linked (GlcNAc...) asparagine glycosylation occurs at N366. C458 contributes to the heme binding site.

It belongs to the cytochrome P450 family. It depends on heme as a cofactor.

The protein localises to the membrane. The protein operates within hormone biosynthesis. In terms of biological role, cytochrome P450 monooxygenase involved in the biosynthesis of abscisic acid (ABA), a phytohormone that acts antagonistically toward salicylic acid (SA), jasmonic acid (JA) and ethylene (ETH) signaling, to impede plant defense responses. During pathogen-host interaction, ABA plays a dual role in disease severity by increasing plant susceptibility and accelerating pathogenesis in the fungus itself. The first step of the pathway catalyzes the reaction from farnesyl diphosphate to alpha-ionylideneethane performed by the alpha-ionylideneethane synthase ABA3 via a three-step reaction mechanism involving 2 neutral intermediates, beta-farnesene and allofarnesene. The cytochrome P450 monooxygenase ABA1 might then be involved in the conversion of alpha-ionylideneethane to alpha-ionylideneacetic acid. Alpha-ionylideneacetic acid is further converted to abscisic acid in 2 steps involving the cytochrome P450 monooxygenase ABA2 and the short-chain dehydrogenase/reductase ABA4, via the intermediates 1'-deoxy-ABA or 1',4'-trans-diol-ABA, depending on the order of action of these 2 enzymes. ABA2 is responsible for the hydroxylation of carbon atom C-1' and ABA4 might be involved in the oxidation of the C-4' carbon atom. The sequence is that of Cytochrome P450 monooxygenase ABA2 from Pyricularia oryzae (strain 70-15 / ATCC MYA-4617 / FGSC 8958) (Rice blast fungus).